A 600-amino-acid chain; its full sequence is 1-deoxy-D-xylulose-5-phosphate synthase (600 aa).

Residues His57 and 98 to 100 each bind thiamine diphosphate; that span reads GHA. Position 125 (Asp125) interacts with Mg(2+). Residues 126–127, Asn155, Tyr264, and Glu343 contribute to the thiamine diphosphate site; that span reads AS. Residue Asn155 participates in Mg(2+) binding.

It belongs to the transketolase family. DXPS subfamily. As to quaternary structure, homodimer. The cofactor is Mg(2+). Requires thiamine diphosphate as cofactor.

It carries out the reaction D-glyceraldehyde 3-phosphate + pyruvate + H(+) = 1-deoxy-D-xylulose 5-phosphate + CO2. It functions in the pathway metabolic intermediate biosynthesis; 1-deoxy-D-xylulose 5-phosphate biosynthesis; 1-deoxy-D-xylulose 5-phosphate from D-glyceraldehyde 3-phosphate and pyruvate: step 1/1. Its function is as follows. Catalyzes the acyloin condensation reaction between C atoms 2 and 3 of pyruvate and glyceraldehyde 3-phosphate to yield 1-deoxy-D-xylulose-5-phosphate (DXP). The chain is 1-deoxy-D-xylulose-5-phosphate synthase from Fusobacterium nucleatum subsp. nucleatum (strain ATCC 25586 / DSM 15643 / BCRC 10681 / CIP 101130 / JCM 8532 / KCTC 2640 / LMG 13131 / VPI 4355).